The following is a 651-amino-acid chain: Tudor domain-containing protein 3 (651 aa).

One can recognise a UBA domain in the interval L193–S233. Disordered regions lie at residues N234–S271, E287–V369, and Y381–P450. S256 carries the phosphoserine modification. Residues S291–K312 show a composition bias toward polar residues. The span at D313–R338 shows a compositional bias: basic and acidic residues. S345 carries the phosphoserine modification. K470 participates in a covalent cross-link: Glycyl lysine isopeptide (Lys-Gly) (interchain with G-Cter in SUMO2). Positions M555 to E615 constitute a Tudor domain. Basic and acidic residues predominate over residues E624–P633. Residues E624–N651 are disordered. An EBM motif; may mediate interaction with the EJC region spans residues G631–N651.

Component of mRNA stress granules. Interacts with FMR1, FXR1, FXR2, EWSR1, FUS, SERBP1, EEF1A1 and DDX3X or DDX3Y, and with the small nuclear ribonucleoprotein-associated proteins SNRPB and SNRPN. Interacts with 'Lys-48'-linked tetra-ubiquitin, but not with monoubiquitin or 'Lys-63'-linked ubiquitin chains. May interact with the exon junction complex (EJC) composed at least of CASC3, EIF4A3, MAGOH and RBM8A. Interacts with POLR2A (via the C-terminal domain (CTD)). In terms of processing, probably cleaved by enteroviral 2A proteinase. As to expression, detected in heart, brain, placenta, lung, liver, skeletal muscle, kidney and pancreas.

It localises to the cytoplasm. Its subcellular location is the nucleus. Its function is as follows. Scaffolding protein that specifically recognizes and binds dimethylarginine-containing proteins. Plays a role in the regulation of translation of target mRNAs by binding Arg/Gly-rich motifs (GAR) in dimethylarginine-containing proteins. In nucleus, acts as a coactivator: recognizes and binds asymmetric dimethylation on the core histone tails associated with transcriptional activation (H3R17me2a and H4R3me2a) and recruits proteins at these arginine-methylated loci. In cytoplasm, acts as an antiviral factor that participates in the assembly of stress granules together with G3BP1. The polypeptide is Tudor domain-containing protein 3 (TDRD3) (Homo sapiens (Human)).